The primary structure comprises 377 residues: Nitric oxide reductase FlRd-NAD(+) reductase (377 aa).

This sequence belongs to the FAD-dependent oxidoreductase family. FAD serves as cofactor.

Its subcellular location is the cytoplasm. It catalyses the reaction 2 reduced [nitric oxide reductase rubredoxin domain] + NAD(+) + H(+) = 2 oxidized [nitric oxide reductase rubredoxin domain] + NADH. It participates in nitrogen metabolism; nitric oxide reduction. One of at least two accessory proteins for anaerobic nitric oxide (NO) reductase. Reduces the rubredoxin moiety of NO reductase. In Shigella flexneri serotype 5b (strain 8401), this protein is Nitric oxide reductase FlRd-NAD(+) reductase.